The primary structure comprises 69 residues: Small, acid-soluble spore protein 1 (69 aa).

The protein belongs to the alpha/beta-type SASP family.

In terms of biological role, SASP are bound to spore DNA. They are double-stranded DNA-binding proteins that cause DNA to change to an a-like conformation. They protect the DNA backbone from chemical and enzymatic cleavage and are thus involved in dormant spore's high resistance to UV light. This chain is Small, acid-soluble spore protein 1 (Su-1), found in Sporosarcina ureae.